Consider the following 177-residue polypeptide: Large ribosomal subunit protein uL6 (177 aa).

It belongs to the universal ribosomal protein uL6 family. As to quaternary structure, part of the 50S ribosomal subunit.

In terms of biological role, this protein binds to the 23S rRNA, and is important in its secondary structure. It is located near the subunit interface in the base of the L7/L12 stalk, and near the tRNA binding site of the peptidyltransferase center. In Cupriavidus taiwanensis (strain DSM 17343 / BCRC 17206 / CCUG 44338 / CIP 107171 / LMG 19424 / R1) (Ralstonia taiwanensis (strain LMG 19424)), this protein is Large ribosomal subunit protein uL6.